The following is a 156-amino-acid chain: Small ribosomal subunit protein uS7 (156 aa).

This sequence belongs to the universal ribosomal protein uS7 family. Part of the 30S ribosomal subunit. Contacts proteins S9 and S11.

In terms of biological role, one of the primary rRNA binding proteins, it binds directly to 16S rRNA where it nucleates assembly of the head domain of the 30S subunit. Is located at the subunit interface close to the decoding center, probably blocks exit of the E-site tRNA. This is Small ribosomal subunit protein uS7 from Lawsonia intracellularis (strain PHE/MN1-00).